The sequence spans 507 residues: Maturase K (507 aa).

It belongs to the intron maturase 2 family. MatK subfamily.

It localises to the plastid. Its subcellular location is the chloroplast. Usually encoded in the trnK tRNA gene intron. Probably assists in splicing its own and other chloroplast group II introns. This Lyonia lucida (Fetterbush) protein is Maturase K.